Consider the following 173-residue polypeptide: Ferritin heavy chain (173 aa).

Residues Gln6–Gly155 enclose the Ferritin-like diiron domain. Fe cation is bound by residues Glu23, Glu58, His61, Glu103, and Gln137.

The protein belongs to the ferritin family. Oligomer of 24 subunits. There are two types of subunits: L (light) chain and H (heavy) chain. The functional molecule is roughly spherical and contains a central cavity into which the insoluble mineral iron core is deposited.

The protein localises to the cytoplasm. It carries out the reaction 4 Fe(2+) + O2 + 4 H(+) = 4 Fe(3+) + 2 H2O. In terms of biological role, stores iron in a soluble, non-toxic, readily available form. Important for iron homeostasis. Has ferroxidase activity. Iron is taken up in the ferrous form and deposited as ferric hydroxides after oxidation. The sequence is that of Ferritin heavy chain from Echinococcus granulosus (Hydatid tapeworm).